A 259-amino-acid chain; its full sequence is Methyltransferase sdnD (259 aa).

The protein belongs to the FkbM methyltransferase family.

The protein operates within antibiotic biosynthesis. In terms of biological role, methyltransferase; part of the gene cluster that mediates the biosynthesis of sordarin and hypoxysordarin, glycoside antibiotics with a unique tetracyclic diterpene aglycone structure. First, the geranylgeranyl diphosphate synthase sdnC constructs GGDP from farnesyl diphosphate and isopentenyl diphosphate. The diterpene cyclase sdnA then catalyzes the cyclization of GGDP to afford cycloaraneosene. Cycloaraneosene is then hydroxylated four times by the putative cytochrome P450 monooxygenases sdnB, sdnE, sdnF and sdnH to give a hydroxylated cycloaraneosene derivative such as cycloaraneosene-8,9,13,19-tetraol. Although the order of the hydroxylations is unclear, at least C8, C9 and C13 of the cycloaraneosene skeleton are hydroxylated before the sordaricin formation. Dehydration of the 13-hydroxy group of the hydroxylated cycloaraneosene derivative might be catalyzed by an unassigned hypothetical protein such as sdnG and sdnP to construct the cyclopentadiene moiety. The FAD-dependent oxidoreductase sdnN is proposed to catalyze the oxidation at C9 of the hydroxylated cycloaraneosene derivative and also catalyze the Baeyer-Villiger oxidation to give the lactone intermediate. The presumed lactone intermediate would be hydrolyzed to give an acrolein moiety and a carboxylate moiety. Then, [4+2]cycloaddition would occur between the acrolein moiety and the cyclopentadiene moiety to give sordaricin. SdnN might also be involved in the [4+2]cycloaddition after the hypothesized oxidation to accommodate the oxidized product and prompt the [4+2]cycloaddition. GDP-6-deoxy-D-altrose may be biosynthesized from GDP-D-mannose by the putative GDP-mannose-4,6-dehydratase sdnI and the short-chain dehydrogenase sdnK. The glycosyltransferase sdnJ catalyzes the attachment of 6-deoxy-D-altrose onto the 19-hydroxy group of sordaricin to give 4'-O-demethylsordarin. The methyltransferase sdnD would complete the biosynthesis of sordarin. Sordarin can be further modified into hypoxysordarin. The unique acyl chain at the 3'-hydroxy group of hypoxysordarin would be constructed by an iterative type I PKS sdnO and the trans-acting polyketide methyltransferase sdnL. SdnL would be responsible for the introduction of an alpha-methyl group of the polyketide chain. Alternatively, the beta-lactamase-like protein sdnR might be responsible for the cleavage and transfer of the polyketide chain from the PKS sdnO to sordarin. Two putative cytochrome P450 monooxygenases, sdnQ and sdnT, might catalyze the epoxidations of the polyketide chain to complete the biosynthesis of hypoxysordarin. Transcriptional regulators sdnM and sdnS are presumably encoded for the transcriptional regulation of the expression of the sdn gene cluster. The polypeptide is Methyltransferase sdnD (Sordaria araneosa (Pleurage araneosa)).